The sequence spans 586 residues: Estrogen receptor (586 aa).

The modulating stretch occupies residues 1–179 (MTMPLPNKTT…SMESTKETRY (179 aa)). A disordered region spans residues 144–173 (FYRSSSDNRRQSGRERMSSANDKGPPSMES). Residues 149 to 160 (SDNRRQSGRERM) show a composition bias toward basic and acidic residues. NR C4-type zinc fingers lie at residues 180-200 (CAVCSDYASGYHYGVWSCEGC) and 216-240 (CPATNQCTIDKNRRKSCQACRLRKC). The segment at residues 180-245 (CAVCSDYASG…RLRKCYEVGM (66 aa)) is a DNA-binding region (nuclear receptor). A hinge region spans residues 246-302 (MKGGIRKDRRGGRLLKHKRQKEEQEQKNDVDPSEIRTASIWVNPSVKSMKLSPVLSL). Residues 252–264 (KDRRGGRLLKHKR) are compositionally biased toward basic residues. Positions 252–276 (KDRRGGRLLKHKRQKEEQEQKNDVD) are disordered. The span at 265 to 276 (QKEEQEQKNDVD) shows a compositional bias: basic and acidic residues. Positions 303–539 (TAEQLISALM…DLLLEMLDAH (237 aa)) constitute an NR LBD domain. A compositionally biased stretch (basic and acidic residues) spans 543 to 556 (TPKDKTTTQEEDSR). The interval 543-569 (TPKDKTTTQEEDSRSPPTTTVNGASPC) is disordered.

The protein belongs to the nuclear hormone receptor family. NR3 subfamily. As to quaternary structure, binds DNA as a homodimer. Can form a heterodimer with ER-beta.

The protein localises to the nucleus. In terms of biological role, the steroid hormones and their receptors are involved in the regulation of eukaryotic gene expression and affect cellular proliferation and differentiation in target tissues. The sequence is that of Estrogen receptor (esr1) from Xenopus laevis (African clawed frog).